The chain runs to 317 residues: Protoheme IX farnesyltransferase (317 aa).

8 consecutive transmembrane segments (helical) span residues 25 to 45, 54 to 74, 126 to 146, 154 to 174, 181 to 201, 227 to 244, 249 to 271, and 281 to 301; these read FFAL…LVGM, PVIA…SGCL, LAAG…SMWL, IVIG…VVTG, LVLF…LALV, IVAY…PVAL, LIYG…QVYH, and AAMG…SALL.

This sequence belongs to the UbiA prenyltransferase family. Protoheme IX farnesyltransferase subfamily.

The protein resides in the cell inner membrane. It carries out the reaction heme b + (2E,6E)-farnesyl diphosphate + H2O = Fe(II)-heme o + diphosphate. It functions in the pathway porphyrin-containing compound metabolism; heme O biosynthesis; heme O from protoheme: step 1/1. Converts heme B (protoheme IX) to heme O by substitution of the vinyl group on carbon 2 of heme B porphyrin ring with a hydroxyethyl farnesyl side group. This is Protoheme IX farnesyltransferase from Methylobacterium sp. (strain 4-46).